The sequence spans 51 residues: Protein Tat (51 aa).

Positions 1-25 (EAETATKSCSGRQANQVSLPKQPAS) are enriched in polar residues. The segment at 1 to 51 (EAETATKSCSGRQANQVSLPKQPASQPRGDPTGPKESKKKVETETETDPVN) is disordered. Lys-21 participates in a covalent cross-link: Glycyl lysine isopeptide (Lys-Gly) (interchain with G-Cter in ubiquitin). Residues 28–30 (RGD) carry the Cell attachment site motif. Positions 33–43 (GPKESKKKVET) are enriched in basic and acidic residues.

It belongs to the lentiviruses Tat family. As to quaternary structure, interacts with host CCNT1. Associates with the P-TEFb complex composed at least of Tat, P-TEFb (CDK9 and CCNT1), TAR RNA, RNA Pol II. Recruits the HATs CREBBP, TAF1/TFIID, EP300, PCAF and GCN5L2. Interacts with host KAT5/Tip60; this interaction targets the latter to degradation. Interacts with the host deacetylase SIRT1. Interacts with host capping enzyme RNGTT; this interaction stimulates RNGTT. Binds to host KDR, and to the host integrins ITGAV/ITGB3 and ITGA5/ITGB1. Interacts with host KPNB1/importin beta-1 without previous binding to KPNA1/importin alpha-1. Interacts with EIF2AK2. Interacts with host nucleosome assembly protein NAP1L1; this interaction may be required for the transport of Tat within the nucleus, since the two proteins interact at the nuclear rim. Interacts with host C1QBP/SF2P32; this interaction involves lysine-acetylated Tat. Interacts with the host chemokine receptors CCR2, CCR3 and CXCR4. Interacts with host DPP4/CD26; this interaction may trigger an anti-proliferative effect. Interacts with host LDLR. Interacts with the host extracellular matrix metalloproteinase MMP1. Interacts with host PRMT6; this interaction mediates Tat's methylation. Interacts with, and is ubiquitinated by MDM2/Hdm2. Interacts with host PSMC3 and HTATIP2. Interacts with STAB1; this interaction may overcome SATB1-mediated repression of IL2 and IL2RA (interleukin) in T cells by binding to the same domain than HDAC1. Interacts (when acetylated) with human CDK13, thereby increasing HIV-1 mRNA splicing and promoting the production of the doubly spliced HIV-1 protein Nef. Acetylation by EP300, CREBBP, GCN5L2/GCN5 and PCAF regulates the transactivation activity of Tat. In terms of processing, phosphorylated by EIF2AK2 on serine and threonine residues adjacent to the basic region important for TAR RNA binding and function. Phosphorylation of Tat by EIF2AK2 is dependent on the prior activation of EIF2AK2 by dsRNA. Post-translationally, asymmetrical arginine methylation by host PRMT6 seems to diminish the transactivation capacity of Tat and affects the interaction with host CCNT1. Polyubiquitination by MDM2 does not target Tat to degradation, but activates its transactivation function and fosters interaction with CCNT1 and TAR RNA.

It is found in the host nucleus. It localises to the host nucleolus. The protein resides in the host cytoplasm. Its subcellular location is the secreted. Its function is as follows. Transcriptional activator that increases RNA Pol II processivity, thereby increasing the level of full-length viral transcripts. Recognizes a hairpin structure at the 5'-LTR of the nascent viral mRNAs referred to as the transactivation responsive RNA element (TAR) and recruits the cyclin T1-CDK9 complex (P-TEFb complex) that will in turn hyperphosphorylate the RNA polymerase II to allow efficient elongation. The CDK9 component of P-TEFb and other Tat-activated kinases hyperphosphorylate the C-terminus of RNA Pol II that becomes stabilized and much more processive. Other factors such as HTATSF1/Tat-SF1, SUPT5H/SPT5, and HTATIP2 are also important for Tat's function. Besides its effect on RNA Pol II processivity, Tat induces chromatin remodeling of proviral genes by recruiting the histone acetyltransferases (HATs) CREBBP, EP300 and PCAF to the chromatin. This also contributes to the increase in proviral transcription rate, especially when the provirus integrates in transcriptionally silent region of the host genome. To ensure maximal activation of the LTR, Tat mediates nuclear translocation of NF-kappa-B by interacting with host RELA. Through its interaction with host TBP, Tat may also modulate transcription initiation. Tat can reactivate a latently infected cell by penetrating in it and transactivating its LTR promoter. In the cytoplasm, Tat is thought to act as a translational activator of HIV-1 mRNAs. Extracellular circulating Tat can be endocytosed by surrounding uninfected cells via the binding to several surface receptors such as CD26, CXCR4, heparan sulfate proteoglycans (HSPG) or LDLR. Neurons are rarely infected, but they internalize Tat via their LDLR. Endosomal low pH allows Tat to cross the endosome membrane to enter the cytosol and eventually further translocate into the nucleus, thereby inducing severe cell dysfunctions ranging from cell activation to cell death. Through its interaction with nuclear HATs, Tat is potentially able to control the acetylation-dependent cellular gene expression. Tat seems to inhibit the HAT activity of KAT5/Tip60 and TAF1, and consequently modify the expression of specific cellular genes. Modulates the expression of many cellular genes involved in cell survival, proliferation or in coding for cytokines (such as IL10) or cytokine receptors. May be involved in the derepression of host interleukin IL2 expression. Mediates the activation of cyclin-dependent kinases and dysregulation of microtubule network. Tat plays a role in T-cell and neurons apoptosis. Tat induced neurotoxicity and apoptosis probably contribute to neuroAIDS. Host extracellular matrix metalloproteinase MMP1 cleaves Tat and decreases Tat's mediated neurotoxicity. Circulating Tat also acts as a chemokine-like and/or growth factor-like molecule that binds to specific receptors on the surface of the cells, affecting many cellular pathways. In the vascular system, Tat binds to ITGAV/ITGB3 and ITGA5/ITGB1 integrins dimers at the surface of endothelial cells and competes with bFGF for heparin-binding sites, leading to an excess of soluble bFGF. Binds to KDR/VEGFR-2. All these Tat-mediated effects enhance angiogenesis in Kaposi's sarcoma lesions. The sequence is that of Protein Tat from Homo sapiens (Human).